Here is a 269-residue protein sequence, read N- to C-terminus: 4-hydroxy-tetrahydrodipicolinate reductase (269 aa).

Residues 8–13, E34, 98–100, and 122–125 contribute to the NAD(+) site; these read GAAGRM, GTT, and APNY. H155 acts as the Proton donor/acceptor in catalysis. H156 provides a ligand contact to (S)-2,3,4,5-tetrahydrodipicolinate. K159 serves as the catalytic Proton donor. 165 to 166 contacts (S)-2,3,4,5-tetrahydrodipicolinate; it reads GT.

It belongs to the DapB family.

It is found in the cytoplasm. It catalyses the reaction (S)-2,3,4,5-tetrahydrodipicolinate + NAD(+) + H2O = (2S,4S)-4-hydroxy-2,3,4,5-tetrahydrodipicolinate + NADH + H(+). The enzyme catalyses (S)-2,3,4,5-tetrahydrodipicolinate + NADP(+) + H2O = (2S,4S)-4-hydroxy-2,3,4,5-tetrahydrodipicolinate + NADPH + H(+). It functions in the pathway amino-acid biosynthesis; L-lysine biosynthesis via DAP pathway; (S)-tetrahydrodipicolinate from L-aspartate: step 4/4. Catalyzes the conversion of 4-hydroxy-tetrahydrodipicolinate (HTPA) to tetrahydrodipicolinate. This Aliivibrio salmonicida (strain LFI1238) (Vibrio salmonicida (strain LFI1238)) protein is 4-hydroxy-tetrahydrodipicolinate reductase.